Consider the following 206-residue polypeptide: Outer-membrane lipoprotein carrier protein (206 aa).

The N-terminal stretch at 1–21 (MKKLLCAVLLSPLLYSNAVLA) is a signal peptide.

Belongs to the LolA family. In terms of assembly, monomer.

The protein localises to the periplasm. Participates in the translocation of lipoproteins from the inner membrane to the outer membrane. Only forms a complex with a lipoprotein if the residue after the N-terminal Cys is not an aspartate (The Asp acts as a targeting signal to indicate that the lipoprotein should stay in the inner membrane). This Shewanella sp. (strain ANA-3) protein is Outer-membrane lipoprotein carrier protein.